Here is a 144-residue protein sequence, read N- to C-terminus: Ribosomal RNA large subunit methyltransferase H (144 aa).

S-adenosyl-L-methionine is bound by residues L63, G92, and 111–116 (LSAMTL).

Belongs to the RNA methyltransferase RlmH family. Homodimer.

It localises to the cytoplasm. It carries out the reaction pseudouridine(1915) in 23S rRNA + S-adenosyl-L-methionine = N(3)-methylpseudouridine(1915) in 23S rRNA + S-adenosyl-L-homocysteine + H(+). Its function is as follows. Specifically methylates the pseudouridine at position 1915 (m3Psi1915) in 23S rRNA. This chain is Ribosomal RNA large subunit methyltransferase H, found in Prochlorococcus marinus (strain MIT 9313).